A 235-amino-acid polypeptide reads, in one-letter code: 5'-methylthioadenosine/S-adenosylhomocysteine nucleosidase (235 aa).

E12 functions as the Proton acceptor in the catalytic mechanism. Substrate contacts are provided by residues G78, I152, and 173–174 (ME). Catalysis depends on D197, which acts as the Proton donor.

The protein belongs to the PNP/UDP phosphorylase family. MtnN subfamily. In terms of assembly, homodimer.

It catalyses the reaction S-adenosyl-L-homocysteine + H2O = S-(5-deoxy-D-ribos-5-yl)-L-homocysteine + adenine. The catalysed reaction is S-methyl-5'-thioadenosine + H2O = 5-(methylsulfanyl)-D-ribose + adenine. The enzyme catalyses 5'-deoxyadenosine + H2O = 5-deoxy-D-ribose + adenine. It functions in the pathway amino-acid biosynthesis; L-methionine biosynthesis via salvage pathway; S-methyl-5-thio-alpha-D-ribose 1-phosphate from S-methyl-5'-thioadenosine (hydrolase route): step 1/2. Its function is as follows. Catalyzes the irreversible cleavage of the glycosidic bond in both 5'-methylthioadenosine (MTA) and S-adenosylhomocysteine (SAH/AdoHcy) to adenine and the corresponding thioribose, 5'-methylthioribose and S-ribosylhomocysteine, respectively. Also cleaves 5'-deoxyadenosine, a toxic by-product of radical S-adenosylmethionine (SAM) enzymes, into 5-deoxyribose and adenine. Thus, is required for in vivo function of the radical SAM enzymes biotin synthase and lipoic acid synthase, that are inhibited by 5'-deoxyadenosine accumulation. The polypeptide is 5'-methylthioadenosine/S-adenosylhomocysteine nucleosidase (Proteus mirabilis (strain HI4320)).